The following is a 357-amino-acid chain: Trans-enoyl reductase resD (357 aa).

Tyr-211 provides a ligand contact to NADP(+).

It belongs to the zinc-containing alcohol dehydrogenase family.

It participates in antifungal biosynthesis. In terms of biological role, trans-enoyl reductase; part of the gene cluster that mediates the biosynthesis of the tetrahydropyranyl antifungal agent restricticin that acts as an inhibitor of CYP51 and blocks the ergosterol biosynthesis. The highly reducing polyketide synthase resH, the short chain dehydrogenase resG, the cyclase resF, the FAD-dependent monooxygenase resA and the enoylreductase resD are required to generate the first stable intermediate desmethylrestrictinol. ResH with resD biosynthesize the first polyketide chain intermediate that is reduced by resG, followed by epoxidation by resA before 6-endo cyclization via epoxide opening by resF leads to desmethylrestrictinol. The methyltransferase resE then catalyzes the C4 O-methylation of desmethylrestrictinol to produce restrictinol, and the nonribosomal peptide synthetase resC catalyzes the C3 esterification of restrictinol with glycine that leads to restricticin. This chain is Trans-enoyl reductase resD, found in Aspergillus sclerotiorum.